We begin with the raw amino-acid sequence, 248 residues long: Coproheme decarboxylase (248 aa).

Fe-coproporphyrin III is bound by residues Arg-130, Tyr-144–Lys-148, His-171, Gln-184, and Ser-222. Tyr-144 is an active-site residue.

Belongs to the ChdC family. Type 1 subfamily. Homopentamer. It depends on Fe-coproporphyrin III as a cofactor.

It carries out the reaction Fe-coproporphyrin III + 2 H2O2 + 2 H(+) = heme b + 2 CO2 + 4 H2O. The catalysed reaction is Fe-coproporphyrin III + H2O2 + H(+) = harderoheme III + CO2 + 2 H2O. The enzyme catalyses harderoheme III + H2O2 + H(+) = heme b + CO2 + 2 H2O. It functions in the pathway porphyrin-containing compound metabolism; protoheme biosynthesis. Involved in coproporphyrin-dependent heme b biosynthesis. Catalyzes the decarboxylation of Fe-coproporphyrin III (coproheme) to heme b (protoheme IX), the last step of the pathway. The reaction occurs in a stepwise manner with a three-propionate intermediate. The protein is Coproheme decarboxylase of Geobacillus kaustophilus (strain HTA426).